Consider the following 519-residue polypeptide: U3 small nucleolar RNA-associated protein 15 homolog (519 aa).

Ala-2 is subject to N-acetylalanine. WD repeat units lie at residues 36-75, 78-117, 120-159, 162-202, 204-242, 246-285, and 287-326; these read KEFGAVSKVDFSPQPPYNYAVTASSRIHIYGRYSQEPIKT, RFKDTAYCATFRQDGRLLVAGSEDGGVQLFDISGRAPLRQ, GHTKAVHSVDFTADKYHVVSGADDYTVKLWDIPNSKEILT, EHSD…SVIS, EHGQPVESVLLFPSGGLLVSAGGRYVKVWDMLKGGQLLV, NHHKTVTCLCLSSSGQRLLSGSLDRKVKVYSTTSYKVVHS, and DYTASILSLALAHEDETIVVGMTNGILSVKHRKSEAKKDS. Lys-249 participates in a covalent cross-link: Glycyl lysine isopeptide (Lys-Gly) (interchain with G-Cter in SUMO2).

In terms of assembly, part of the small subunit (SSU) processome, composed of more than 70 proteins and the RNA chaperone small nucleolar RNA (snoRNA) U3. May be a component of the proposed t-UTP subcomplex of the ribosomal small subunit (SSU) processome containing at least UTP4, WDR43, HEATR1, UTP15, WDR75. Interacts directly with UTP4 and WDR43.

It localises to the nucleus. The protein localises to the nucleolus. Its function is as follows. Ribosome biogenesis factor. Involved in nucleolar processing of pre-18S ribosomal RNA. Required for optimal pre-ribosomal RNA transcription by RNA polymerase I. Part of the small subunit (SSU) processome, first precursor of the small eukaryotic ribosomal subunit. During the assembly of the SSU processome in the nucleolus, many ribosome biogenesis factors, an RNA chaperone and ribosomal proteins associate with the nascent pre-rRNA and work in concert to generate RNA folding, modifications, rearrangements and cleavage as well as targeted degradation of pre-ribosomal RNA by the RNA exosome. The protein is U3 small nucleolar RNA-associated protein 15 homolog of Bos taurus (Bovine).